Here is a 242-residue protein sequence, read N- to C-terminus: MGKISDLNYSQHITLADNFKQKNEALDTWYVGMNDFARIAGGQNSRSNILSPRAFLEFLAKIFTLGYVDFSKRSNEAGRNMMAHIEFSSYSKDTDGNEKMKFYMNNPEGERADLSKVKIEITLASASTKGIREGHTVIIFKQSDGSTNRYEGKSFERKDDSSLHLITNKVLACYQREANKKIARLLNNHQKLNNIQELNDSQELNNSQKLNNSQELNNSQVSCKGSVDSTITDLLEKALNKG.

It is found in the secreted. Functionally, may contribute to pathogenesis, although some of its characteristics suggest it is a fossil gene. This is Invasion chromosome antigen R from Shigella flexneri serotype 5a (strain M90T).